Consider the following 491-residue polypeptide: Peptidoglycan D,D-transpeptidase PbpA (491 aa).

The Cytoplasmic portion of the chain corresponds to 1–8; that stretch reads MNTSLRRV. Residues 9–29 traverse the membrane as a helical; Signal-anchor for type II membrane protein segment; it reads AVAIMVLIVLLLANATVTQVF. Residues 30–491 lie on the Periplasmic side of the membrane; the sequence is AADGLRADPR…TIAAALREGS (462 aa). Residues 160–484 are transpeptidase; it reads GSVVALEPST…AAPIGRATIA (325 aa). The Acyl-ester intermediate role is filled by Ser222.

This sequence belongs to the transpeptidase family.

It localises to the cell inner membrane. The catalysed reaction is Preferential cleavage: (Ac)2-L-Lys-D-Ala-|-D-Ala. Also transpeptidation of peptidyl-alanyl moieties that are N-acyl substituents of D-alanine.. Its pathway is cell wall biogenesis; peptidoglycan biosynthesis. Functionally, transpeptidase that catalyzes cross-linking of the peptidoglycan cell wall. Required for the regulation of cell length. This Mycolicibacterium smegmatis (strain ATCC 700084 / mc(2)155) (Mycobacterium smegmatis) protein is Peptidoglycan D,D-transpeptidase PbpA (pbpA).